The chain runs to 156 residues: uncharacterized protein (156 aa).

A run of 5 helical transmembrane segments spans residues 7-29 (AQIS…SYFL), 42-64 (YFAL…PYLF), 69-88 (AVTG…AITS), 98-120 (AAIW…YPAL), and 133-155 (ALVL…ISRI).

The protein localises to the cell membrane. This is an uncharacterized protein from Pasteurella multocida (strain Pm70).